A 1733-amino-acid polypeptide reads, in one-letter code: MHLGAYRTRHGKVSPTTETKLFLRFIVLCVVWISVHAQGQGIDILQQLGLGGRDVRYTSSVTAVPSSSWSTPLPQGVHLTDFGVILTDNAYIESPLVNILPISLRQPLTVLIGLQSFKVNNAFLFSIRNNNRLQFGVQLLPKKLIVHVGGKQTVTFNYSAHDERWHSFAITVDHHVISMFVECGKRHFSGETTSDVQTFDPHSVFTLGSINNSSAHFEGTVCQLEIMPSTAASAEYCRHLKQQCLRADASQAQRNLPHTAGMPTRHPAHTPLPRGFPGTDSPQKRFTEQDSLPKGFDGTELPRETFADGKSIPNNRSNGSATVHESQEHQTPRAQLTSFHSGNISAVTLPNYRIQAKEITTKEETNLTLSVAHHLPSEARMNEEGRINPLFAGFDNITQHEEAAGLPLPKKASSGFAHTNQDTMKNLEKALTANLYTNELIEMERILNSTLYRVMYGPSVDNHLELRKEGEFYPDATNPIEGSYEPQAYDYYSYEDYNAVLDMEYLRGPKGDPGPPGPPGPMGIPGPSGKRGPRGIPGPHGNPGLPGLPGPKGPKGDPGLSPGQAASGEKGDPGLLGLVGPPGLQGAKGLKGHPGLPGLRGEHGLPGLAGNIGSPGYPGRQGLAGPEGNPGSKGVRGFIGSPGEVGQLGPEGERGTPGVRGKKGPKGRQGFPGDFGDRGPAGLDGSPGLVGGTGPPGFPGVTGSVGPAGPTGPPGAPGPMGLSGSRGPSGIKGDKGEQGVAGEPGEPGYPGDKGNIGSPGPPGIRGKSGPSGQPGDPGPQGPSGPPGPEGFPGDIGIPGQNGPEGPKGHLGNRGPPGPPGLKGTQGEEGPIGPFGELGSRGKPGRKGYMGEPGPEGLKGEVGDQGDIGKTGETGPVGLPGEVGITGSIGEKGERGSPGPLGPQGEKGVMGYPGPPGAPGPMGPLGLPGLVGARGAPGSPGPKGQRGPRGPDGLAGDQGGHGAKGEKGNQGKRGLPGLPGKAGSPGERGVQGKPGFQGLPGSSGDVGPAGEPGPRGLPGIAGLPGEMGVEGPPGTEGDSGLQGEPGAKGDGGPAGSAGATGEPGPRGEPGAPGEEGLQGKDGLKGAPGGSGLPGEDGDKGEMGLPGTAGPVGRPGQMGLPGPEGIVGTPGQRGRLGKKGDKGQVGPTGEAGSRGPPGSVGENGPKGARGTRGAVGPLGLMGPEGEPGIPGYRGHQGQPGPSGLPGPKGEKGYPGEDSTVLGPPGPPGEPGPMGEQGETGEHGEEGYKGHMGVPGLRGATGQQGPPGEPGDQGGQGPKGERGSEGPQGKRGVPGPSGKPGIPGVPGFPGPKGLQGYPGVDGMSGYPGKPGLPGKQGLLGVPGSPGRTGVAGSPGPQGGKGASGPPGSPGAPGPKGEQGLPGQPGVPGQRGHRGTPGDQGLRGAPGLKGQPGEHGDQGLAGFQGFPGPRGPEGDAGIVGIVGPKGPIGQRGNTGPLGREGIIGPTGGTGPRGEKGFRGETGPQGPRGQPGPPGPPGAPGPRRQMDINAAIRALIESNSAQQMESYQNTEGTLISHSSDIFKTLTYLSSLLSSIKNPLGTRENPARICKDLLSCQYKVSDGKYWIDPNLGCSSDAFEVFCNFSAGGQTCLSPVSVTKLEFGVSKVQMNFLHLLSSEATHTITIHCLNTPRWSSTWADGPELPISFKGWNGQIFEENTLLEPQVLSDDCKIQDGSWHKAKFLFHTQNPNQLPVTEVQNLPHLGTEQKRYIESNSVCFL.

Residues Met-1–Val-35 form the signal peptide. Residues Ile-102–Ser-229 form the Laminin G-like domain. N-linked (GlcNAc...) asparagine glycosylation occurs at Asn-157. The interval Pro-257–Gln-335 is disordered. The segment covering Ile-312–His-324 has biased composition (polar residues). Residues Asn-366, Asn-396, and Asn-448 are each glycosylated (N-linked (GlcNAc...) asparagine). Residues Tyr-505 to Arg-1499 are disordered. Collagen-like domains lie at Leu-506–Ser-561, Gly-577–Arg-636, Gly-679–Gln-738, Gly-742–Asn-801, Gly-802–Val-861, Gly-886–Arg-945, Gly-946–Val-1005, Gly-1006–Arg-1065, Gly-1072–Arg-1131, Gly-1135–Gly-1189, Arg-1191–Asp-1215, Gly-1220–Arg-1279, Gly-1316–Gln-1375, Gly-1376–Val-1435, and Gly-1439–Arg-1498. Residues Asp-512 to Ile-524 are compositionally biased toward pro residues. Low complexity-rich tracts occupy residues Pro-573 to Leu-599 and Pro-699 to Ala-708. The segment covering Asp-776–Glu-789 has biased composition (pro residues). A compositionally biased stretch (pro residues) spans Pro-912 to Met-921. Over residues Pro-923–Gln-944 the composition is skewed to low complexity. The span at Gly-1045–Gly-1054 shows a compositional bias: gly residues. Low complexity predominate over residues Ala-1056–Glu-1074. The segment covering Gly-1084–Gly-1093 has biased composition (gly residues). Residues Pro-1175 to Pro-1205 show a composition bias toward low complexity. A compositionally biased stretch (basic and acidic residues) spans Thr-1237–Lys-1246. Over residues Tyr-1323–Pro-1339 the composition is skewed to low complexity. Positions Gly-1352–Gly-1361 are enriched in gly residues. Composition is skewed to low complexity over residues Pro-1371 to Gln-1386 and Ile-1434 to Ile-1444. Over residues Gln-1485 to Pro-1495 the composition is skewed to pro residues. Residues Ser-1534–Leu-1733 form the Fibrillar collagen NC1 domain.

Belongs to the fibrillar collagen family. Expressed in skeleton. Found at ossification centers of the craniofacial, axial and appendicular skeleton. Also expressed in retina and to a lower extent in cornea, skin and tendon.

It is found in the secreted. The protein resides in the extracellular space. It localises to the extracellular matrix. Involved in osteoblast differentiation. The sequence is that of Collagen alpha-1(XXIV) chain (Col24a1) from Mus musculus (Mouse).